The following is a 112-amino-acid chain: Large ribosomal subunit protein eL30z (112 aa).

The protein belongs to the eukaryotic ribosomal protein eL30 family.

The protein is Large ribosomal subunit protein eL30z (RPL30A) of Arabidopsis thaliana (Mouse-ear cress).